Reading from the N-terminus, the 91-residue chain is Small ribosomal subunit protein bS20 (91 aa).

This sequence belongs to the bacterial ribosomal protein bS20 family.

Functionally, binds directly to 16S ribosomal RNA. The sequence is that of Small ribosomal subunit protein bS20 from Caulobacter vibrioides (strain ATCC 19089 / CIP 103742 / CB 15) (Caulobacter crescentus).